The sequence spans 240 residues: Insulin-like growth factor-binding protein 6 (240 aa).

The first 27 residues, 1–27 (MTPHRLLPPLLLLLALLLAASPGGALA), serve as a signal peptide directing secretion. The IGFBP N-terminal domain occupies 28-107 (RCPGCGQGVQ…LLGRGRCLPA (80 aa)). Disulfide bonds link Cys29–Cys32, Cys40–Cys44, Cys57–Cys63, Cys71–Cys84, and Cys78–Cys104. The interval 109 to 160 (APAVAEENPKESKPQAGTARPQDVNRRDQQRNPGTSTTPSQPNSAGVQDTEM) is disordered. O-linked (HexNAc...) threonine glycosylation occurs at Thr126. Residues 139–155 (RNPGTSTTPSQPNSAGV) are compositionally biased toward polar residues. The O-linked (HexNAc...) serine glycan is linked to Ser144. 2 O-linked (HexNAc...) threonine glycosylation sites follow: Thr145 and Thr146. Ser152 is a glycosylation site (O-linked (HexNAc...) serine). The region spanning 160-234 (MGPCRRHLDS…SPDGNGSSSC (75 aa)) is the Thyroglobulin type-1 domain. 3 cysteine pairs are disulfide-bonded: Cys163–Cys190, Cys201–Cys212, and Cys214–Cys234. Positions 217 to 240 (RMGKSLPGSPDGNGSSSCPTGSSG) are disordered. Residues 228-240 (GNGSSSCPTGSSG) are compositionally biased toward polar residues.

Interacts (via C-terminal domain) with PHB2. In terms of processing, O-linked glycans consist of hexose (probably Gal), N-acetylhexosamine (probably GalNAc) and sialic acid residues. O-glycosylated with core 1 or possibly core 8 glycans. O-glycosylated on one site only in the region AA 143-168 in cerebrospinal fluid.

The protein resides in the secreted. Functionally, IGF-binding proteins prolong the half-life of the IGFs and have been shown to either inhibit or stimulate the growth promoting effects of the IGFs on cell culture. They alter the interaction of IGFs with their cell surface receptors. Activates the MAPK signaling pathway and induces cell migration. The chain is Insulin-like growth factor-binding protein 6 from Homo sapiens (Human).